Reading from the N-terminus, the 77-residue chain is Small integral membrane protein 7 (77 aa).

Positions 1–17 are cleaved as a signal peptide; that stretch reads MIGDLLIFGTLLMNAGA. At 18–55 the chain is on the extracellular side; sequence VLNFKLKKRETQSQGFGDDSGSSSTGENIREFLLSLRY. The chain crosses the membrane as a helical span at residues 56 to 76; sequence FRIFIALWNIFMMFCMIVLFG. A topological domain (cytoplasmic) is located at residue Ser-77.

This sequence belongs to the SMIM7 family.

The protein localises to the membrane. This is Small integral membrane protein 7 (smim7) from Danio rerio (Zebrafish).